An 88-amino-acid chain; its full sequence is UPF0250 protein swp_3927 (88 aa).

The protein belongs to the UPF0250 family.

This chain is UPF0250 protein swp_3927, found in Shewanella piezotolerans (strain WP3 / JCM 13877).